A 333-amino-acid chain; its full sequence is Potassium channel protein 1 (333 aa).

Residues 1–6 (METYEK) lie on the Cytoplasmic side of the membrane. The chain crosses the membrane as a helical span at residues 7–27 (IELGIIVIILLILIESVILMT). Over 28-60 (VEGWDFFTAFYTAVVTISTVGYGDYTPQTFLGK) the chain is Extracellular. The short motif at 46-51 (TVGYGD) is the Selectivity filter element. A helical membrane pass occupies residues 61 to 81 (LSVIIYIFAGVGAVAYTMGNI). The Cytoplasmic portion of the chain corresponds to 82-333 (ASFFIEGHFR…KLKRYVEGVE (252 aa)). The region spanning 107 to 229 (NNHYIICGYG…GADRAVCPYI (123 aa)) is the RCK N-terminal domain. In terms of domain architecture, RCK C-terminal spans 246-331 (EFIHSLVATE…LEKLKRYVEG (86 aa)).

As to quaternary structure, homotetramer.

The protein localises to the cell membrane. In terms of biological role, potassium channel protein. Seems to conduct potassium at low membrane potentials. This Methanocaldococcus jannaschii (strain ATCC 43067 / DSM 2661 / JAL-1 / JCM 10045 / NBRC 100440) (Methanococcus jannaschii) protein is Potassium channel protein 1.